We begin with the raw amino-acid sequence, 452 residues long: RNA polymerase II-associated protein rba50 (452 aa).

Disordered regions lie at residues 60 to 83 (LRKN…IDEE), 125 to 202 (EREL…QTKR), and 223 to 261 (PIKG…PLEF). Residues 125–135 (ERELAQRKDRS) show a composition bias toward basic and acidic residues. Polar residues predominate over residues 136 to 154 (SQVNTPDLSQRPSDDSFLS). Positions 156–165 (EKLRSSEKLN) are enriched in basic and acidic residues. Residues 170–191 (SVLSSEAVDSSSGSPSPPMALS) are compositionally biased toward low complexity.

It belongs to the RPAP1 family. As to quaternary structure, interacts with RNA polymerase II.

It is found in the cytoplasm. It localises to the nucleus. Its function is as follows. Forms an interface between the RNA polymerase II enzyme and chaperone/scaffolding proteins, suggesting that it is required to connect RNA polymerase II to regulators of protein complex formation. The polypeptide is RNA polymerase II-associated protein rba50 (rba50) (Schizosaccharomyces pombe (strain 972 / ATCC 24843) (Fission yeast)).